The chain runs to 130 residues: Large ribosomal subunit protein eL32 (130 aa).

This sequence belongs to the eukaryotic ribosomal protein eL32 family.

In Pyrococcus horikoshii (strain ATCC 700860 / DSM 12428 / JCM 9974 / NBRC 100139 / OT-3), this protein is Large ribosomal subunit protein eL32 (rpl32e).